Reading from the N-terminus, the 394-residue chain is Acetyl-CoA acetyltransferase (394 aa).

Residue Cys-89 is the Acyl-thioester intermediate of the active site. Residues His-350 and Cys-380 each act as proton acceptor in the active site.

This sequence belongs to the thiolase-like superfamily. Thiolase family. In terms of assembly, homotetramer.

The protein localises to the cytoplasm. The catalysed reaction is 2 acetyl-CoA = acetoacetyl-CoA + CoA. The protein operates within biopolymer metabolism; poly-(R)-3-hydroxybutanoate biosynthesis. It participates in metabolic intermediate biosynthesis; (R)-mevalonate biosynthesis; (R)-mevalonate from acetyl-CoA: step 1/3. The sequence is that of Acetyl-CoA acetyltransferase from Allochromatium vinosum (strain ATCC 17899 / DSM 180 / NBRC 103801 / NCIMB 10441 / D) (Chromatium vinosum).